Reading from the N-terminus, the 154-residue chain is 3-hydroxyacyl-[acyl-carrier-protein] dehydratase FabZ (154 aa).

The active site involves H54.

It belongs to the thioester dehydratase family. FabZ subfamily.

Its subcellular location is the cytoplasm. It carries out the reaction a (3R)-hydroxyacyl-[ACP] = a (2E)-enoyl-[ACP] + H2O. In terms of biological role, involved in unsaturated fatty acids biosynthesis. Catalyzes the dehydration of short chain beta-hydroxyacyl-ACPs and long chain saturated and unsaturated beta-hydroxyacyl-ACPs. This Chlamydia caviae (strain ATCC VR-813 / DSM 19441 / 03DC25 / GPIC) (Chlamydophila caviae) protein is 3-hydroxyacyl-[acyl-carrier-protein] dehydratase FabZ.